The following is a 335-amino-acid chain: UPF0353 protein Mjls_2492 (335 aa).

The next 2 membrane-spanning stretches (helical) occupy residues 18–38 (WFFL…IVAL) and 67–87 (LPAI…AGPT). The VWFA domain maps to 98–294 (VVMLVIDVSQ…EQLREVYANL (197 aa)). A helical transmembrane segment spans residues 309 to 329 (VGWLRLGALVLALSALAALLL).

It belongs to the UPF0353 family.

It localises to the cell membrane. The polypeptide is UPF0353 protein Mjls_2492 (Mycobacterium sp. (strain JLS)).